The primary structure comprises 82 residues: uncharacterized protein (82 aa).

The protein belongs to the chlamydial CPn_0711/CT_665/TC_0036 family.

This is an uncharacterized protein from Chlamydia pneumoniae (Chlamydophila pneumoniae).